The primary structure comprises 243 residues: Protein GrpE (243 aa).

This sequence belongs to the GrpE family. In terms of assembly, homodimer.

The protein resides in the cytoplasm. Its function is as follows. Participates actively in the response to hyperosmotic and heat shock by preventing the aggregation of stress-denatured proteins, in association with DnaK and GrpE. It is the nucleotide exchange factor for DnaK and may function as a thermosensor. Unfolded proteins bind initially to DnaJ; upon interaction with the DnaJ-bound protein, DnaK hydrolyzes its bound ATP, resulting in the formation of a stable complex. GrpE releases ADP from DnaK; ATP binding to DnaK triggers the release of the substrate protein, thus completing the reaction cycle. Several rounds of ATP-dependent interactions between DnaJ, DnaK and GrpE are required for fully efficient folding. The chain is Protein GrpE from Mycoplasma mobile (strain ATCC 43663 / 163K / NCTC 11711) (Mesomycoplasma mobile).